Consider the following 2221-residue polypeptide: RNA-directed RNA polymerase L (2221 aa).

An endonuclease region spans residues 29 to 292 (KTVLLSQVNF…SERETLIEAE (264 aa)). Mn(2+)-binding residues include Glu-54, Asp-91, and Glu-104. Residue Lys-117 is part of the active site. The region spanning 1171–1369 (LDMKSVVRLS…YLSSKLNKFI (199 aa)) is the RdRp catalytic domain. Asp-1327 serves as a coordination point for Mg(2+).

The protein belongs to the Bunyavirales RNA polymerase family. In terms of assembly, homomultimer; the oligomeric structure is essential for the polymerase activity. Interacts with nucleoprotein N. Interacts with protein Z; this interaction inhibits viral transcription and replication, Z partially blocks the product exit tunnel for the releasing nascent RNA product. Requires Mn(2+) as cofactor. The cofactor is Mg(2+).

The protein resides in the virion. Its subcellular location is the host cytoplasm. The catalysed reaction is RNA(n) + a ribonucleoside 5'-triphosphate = RNA(n+1) + diphosphate. Its function is as follows. RNA-dependent RNA polymerase, which is responsible for the replication and transcription of the viral RNA genome using antigenomic RNA as an intermediate. During transcription, synthesizes subgenomic RNAs and assures their capping by a cap-snatching mechanism, which involves the endonuclease activity cleaving the host capped pre-mRNAs. These short capped RNAs are then used as primers for viral transcription. The 3'-end of subgenomic mRNAs molecules are heterogeneous and not polyadenylated. The replicase function is to direct synthesis of antigenomic and genomic RNA which are encapsidated and non capped. As a consequence of the use of the same enzyme for both transcription and replication, these mechanisms need to be well coordinated. These processes may be regulated by proteins N and Z in a dose-dependent manner. Z protein inhibits the viral polymerase L und thus the viral transcription and RNA synthesis. The polypeptide is RNA-directed RNA polymerase L (Sigmodon hispidus (Hispid cotton rat)).